We begin with the raw amino-acid sequence, 96 residues long: Large ribosomal subunit protein eL21 (96 aa).

The protein belongs to the eukaryotic ribosomal protein eL21 family.

This chain is Large ribosomal subunit protein eL21, found in Methanosphaerula palustris (strain ATCC BAA-1556 / DSM 19958 / E1-9c).